The sequence spans 137 residues: Protein PsiE homolog (137 aa).

Transmembrane regions (helical) follow at residues Leu15–Ile35, Tyr55–Val75, Phe82–Ile102, and Ala108–Ala128.

This sequence belongs to the PsiE family.

Its subcellular location is the cell membrane. The protein is Protein PsiE homolog of Listeria innocua serovar 6a (strain ATCC BAA-680 / CLIP 11262).